The sequence spans 91 residues: Elongation factor 1-beta (91 aa).

The protein belongs to the EF-1-beta/EF-1-delta family.

In terms of biological role, promotes the exchange of GDP for GTP in EF-1-alpha/GDP, thus allowing the regeneration of EF-1-alpha/GTP that could then be used to form the ternary complex EF-1-alpha/GTP/AAtRNA. This is Elongation factor 1-beta from Thermofilum pendens (strain DSM 2475 / Hrk 5).